Consider the following 554-residue polypeptide: Valerianol synthase TPS1B (554 aa).

Mg(2+) contacts are provided by Asp-307 and Asp-311. A DDXXD motif motif is present at residues 326-330 (VQRWD). Mg(2+) is bound by residues Asp-452, Ser-456, and Glu-460.

It belongs to the terpene synthase family. Mg(2+) serves as cofactor.

It carries out the reaction (2E,6E)-farnesyl diphosphate + H2O = valerianol + diphosphate. The protein operates within secondary metabolite biosynthesis; terpenoid biosynthesis. Its function is as follows. Terpene synthase that catalyzes the biosynthesis of the terpene valerianol, which is a volatile compound of floral scent. The chain is Valerianol synthase TPS1B from Camellia hiemalis (Camellia).